The primary structure comprises 533 residues: Probable lipid II flippase MurJ (533 aa).

The next 14 helical transmembrane spans lie at 11 to 31 (LANI…FGLL), 39 to 61 (AFGV…FLFI), 96 to 116 (LVSG…GIFI), 135 to 155 (LQIM…FGTL), 166 to 186 (ISPL…VWQL), 196 to 216 (WLLG…LQWL), 253 to 273 (LSSG…SFIP), 284 to 304 (FVAL…FLPV), 330 to 350 (LTMF…VQVI), 360 to 380 (AAAE…FYLG), 400 to 420 (VSLF…KPFG), 422 to 442 (VGIV…FIWM), 452 to 472 (LGGW…ASVA), and 493 to 513 (ILEV…GVAL).

The protein belongs to the MurJ/MviN family.

The protein resides in the cell inner membrane. It functions in the pathway cell wall biogenesis; peptidoglycan biosynthesis. In terms of biological role, involved in peptidoglycan biosynthesis. Transports lipid-linked peptidoglycan precursors from the inner to the outer leaflet of the cytoplasmic membrane. This chain is Probable lipid II flippase MurJ, found in Synechocystis sp. (strain ATCC 27184 / PCC 6803 / Kazusa).